A 64-amino-acid polypeptide reads, in one-letter code: DNA-directed RNA polymerase subunit Rpo10 (64 aa).

The Zn(2+) site is built by Cys7, Cys10, Cys45, and Cys46.

The protein belongs to the archaeal Rpo10/eukaryotic RPB10 RNA polymerase subunit family. As to quaternary structure, part of the RNA polymerase complex. The cofactor is Zn(2+).

Its subcellular location is the cytoplasm. It catalyses the reaction RNA(n) + a ribonucleoside 5'-triphosphate = RNA(n+1) + diphosphate. Functionally, DNA-dependent RNA polymerase (RNAP) catalyzes the transcription of DNA into RNA using the four ribonucleoside triphosphates as substrates. In Haloquadratum walsbyi (strain DSM 16790 / HBSQ001), this protein is DNA-directed RNA polymerase subunit Rpo10.